Consider the following 950-residue polypeptide: UvrABC system protein A (950 aa).

Residue 36–43 coordinates ATP; the sequence is GKSGSGKS. The segment at 260-287 adopts a C4-type zinc-finger fold; the sequence is CPLCGFSLPLIEPRLFSFNSPFGACSEC. 2 consecutive ABC transporter domains span residues 317–599 and 619–947; these read FKTS…KNSL and ADKG…MFLK. Residue 651-658 coordinates ATP; that stretch reads GVSGSGKS. The C4-type zinc finger occupies 750 to 776; that stretch reads CEKCQGDGYLNIQMHFLPDVFVPCDLC.

This sequence belongs to the ABC transporter superfamily. UvrA family. Forms a heterotetramer with UvrB during the search for lesions.

It is found in the cytoplasm. Its function is as follows. The UvrABC repair system catalyzes the recognition and processing of DNA lesions. UvrA is an ATPase and a DNA-binding protein. A damage recognition complex composed of 2 UvrA and 2 UvrB subunits scans DNA for abnormalities. When the presence of a lesion has been verified by UvrB, the UvrA molecules dissociate. This chain is UvrABC system protein A, found in Borreliella burgdorferi (strain ATCC 35210 / DSM 4680 / CIP 102532 / B31) (Borrelia burgdorferi).